The sequence spans 341 residues: tRNA N6-adenosine threonylcarbamoyltransferase (341 aa).

2 residues coordinate Fe cation: histidine 111 and histidine 115. Residues 134 to 138 (LVSGG), aspartate 167, glycine 180, and asparagine 272 contribute to the substrate site. Aspartate 300 contributes to the Fe cation binding site.

Belongs to the KAE1 / TsaD family. It depends on Fe(2+) as a cofactor.

The protein localises to the cytoplasm. It carries out the reaction L-threonylcarbamoyladenylate + adenosine(37) in tRNA = N(6)-L-threonylcarbamoyladenosine(37) in tRNA + AMP + H(+). Its function is as follows. Required for the formation of a threonylcarbamoyl group on adenosine at position 37 (t(6)A37) in tRNAs that read codons beginning with adenine. Is involved in the transfer of the threonylcarbamoyl moiety of threonylcarbamoyl-AMP (TC-AMP) to the N6 group of A37, together with TsaE and TsaB. TsaD likely plays a direct catalytic role in this reaction. The sequence is that of tRNA N6-adenosine threonylcarbamoyltransferase from Edwardsiella ictaluri (strain 93-146).